We begin with the raw amino-acid sequence, 1074 residues long: Isoleucine--tRNA ligase (1074 aa).

Positions 50-60 match the 'HIGH' region motif; it reads PYTSGAAHMGT. Residues 605–609 carry the 'KMSKS' region motif; the sequence is GMSKS. Residue Lys-608 participates in ATP binding.

Belongs to the class-I aminoacyl-tRNA synthetase family. IleS type 2 subfamily. In terms of assembly, monomer. It depends on Zn(2+) as a cofactor.

It localises to the cytoplasm. The enzyme catalyses tRNA(Ile) + L-isoleucine + ATP = L-isoleucyl-tRNA(Ile) + AMP + diphosphate. In terms of biological role, catalyzes the attachment of isoleucine to tRNA(Ile). As IleRS can inadvertently accommodate and process structurally similar amino acids such as valine, to avoid such errors it has two additional distinct tRNA(Ile)-dependent editing activities. One activity is designated as 'pretransfer' editing and involves the hydrolysis of activated Val-AMP. The other activity is designated 'posttransfer' editing and involves deacylation of mischarged Val-tRNA(Ile). This is Isoleucine--tRNA ligase from Haloarcula marismortui (strain ATCC 43049 / DSM 3752 / JCM 8966 / VKM B-1809) (Halobacterium marismortui).